Here is a 783-residue protein sequence, read N- to C-terminus: Spindle pole body protein ppc89 (783 aa).

A Phosphoserine modification is found at S157. Disordered regions lie at residues 180–216, 434–458, 471–504, and 528–610; these read FDSPTEALPPKPTTPWRRNGFRSKTTPNLNSGKETPS, KESNVTSKIKSTAENSSKPLSMNEA, ENKSGANTKEMSNGTETAKENCSPQQDSTSPTSG, and LSQS…MKGN. Polar residues-rich tracts occupy residues 201–216, 437–453, and 474–504; these read RSKTTPNLNSGKETPS, NVTSKIKSTAENSSKPL, and SGANTKEMSNGTETAKENCSPQQDSTSPTSG. Residues 536–551 are compositionally biased toward basic residues; it reads PVKHRKRRPKSKRRIT. Residues 566-590 are compositionally biased toward acidic residues; it reads ESDEGSEEISLDSEYSDILSDDGDF.

Its subcellular location is the cytoplasm. The protein localises to the cytoskeleton. It localises to the microtubule organizing center. It is found in the spindle pole body. In terms of biological role, has a role in meiosis. This chain is Spindle pole body protein ppc89 (ppc89), found in Schizosaccharomyces pombe (strain 972 / ATCC 24843) (Fission yeast).